The sequence spans 456 residues: UDP-N-acetylmuramate--L-alanine ligase (456 aa).

112–118 (GAHGKTS) provides a ligand contact to ATP.

This sequence belongs to the MurCDEF family.

The protein localises to the cytoplasm. The catalysed reaction is UDP-N-acetyl-alpha-D-muramate + L-alanine + ATP = UDP-N-acetyl-alpha-D-muramoyl-L-alanine + ADP + phosphate + H(+). It functions in the pathway cell wall biogenesis; peptidoglycan biosynthesis. Its function is as follows. Cell wall formation. The polypeptide is UDP-N-acetylmuramate--L-alanine ligase (Desulforapulum autotrophicum (strain ATCC 43914 / DSM 3382 / VKM B-1955 / HRM2) (Desulfobacterium autotrophicum)).